The chain runs to 170 residues: 3-hydroxydecanoyl-[acyl-carrier-protein] dehydratase (170 aa).

The active site involves histidine 69.

This sequence belongs to the thioester dehydratase family. FabA subfamily. Homodimer.

Its subcellular location is the cytoplasm. It catalyses the reaction a (3R)-hydroxyacyl-[ACP] = a (2E)-enoyl-[ACP] + H2O. It carries out the reaction (3R)-hydroxydecanoyl-[ACP] = (2E)-decenoyl-[ACP] + H2O. The catalysed reaction is (2E)-decenoyl-[ACP] = (3Z)-decenoyl-[ACP]. It functions in the pathway lipid metabolism; fatty acid biosynthesis. Functionally, necessary for the introduction of cis unsaturation into fatty acids. Catalyzes the dehydration of (3R)-3-hydroxydecanoyl-ACP to E-(2)-decenoyl-ACP and then its isomerization to Z-(3)-decenoyl-ACP. Can catalyze the dehydratase reaction for beta-hydroxyacyl-ACPs with saturated chain lengths up to 16:0, being most active on intermediate chain length. The protein is 3-hydroxydecanoyl-[acyl-carrier-protein] dehydratase of Idiomarina loihiensis (strain ATCC BAA-735 / DSM 15497 / L2-TR).